Here is a 160-residue protein sequence, read N- to C-terminus: Monooxygenase AacuO (160 aa).

This sequence belongs to the avfA family.

The protein operates within secondary metabolite biosynthesis. Functionally, monooxygenase; part of the gene cluster that mediates the biosynthesis of the tetrahydroxanthone dimer secalonic acid D. The pathway begins with the synthesis of atrochrysone thioester by the polyketide synthase AacuL. The atrochrysone carboxyl ACP thioesterase AacuM then breaks the thioester bond and releases the atrochrysone carboxylic acid from AacuL. Atrochrysone carboxylic acid is decarboxylated by the decarboxylase AacuI, and oxidized by the anthrone oxygenase AacuG to yield emodin. Emodin is then reduced to emodin hydroquinone by a yet unidentified oxidoreductase. A-ring reduction by the short chain dehydrogenase AacuN, dehydration by the scytalone dehydratase-like protein AacuK and probable spontaneous re-oxidation, results in overall deoxygenation to chrysophanol. Baeyer-Villiger oxidation by the Baeyer-Villiger monooxygenase (BVMO) AacuH then yields monodictyphenone. Monodictyphenone is transformed into compounds with the tetrahydroxanthone skeleton via methylesterification by the methyltransferase AacuQ, followed by the action of the flavin-dependent monooxygenase AacuC, the isomerase AacuP, and the short chain dehydrogenase/reductase AacuF or AacuD. AacuF and AacuD should accept the same compound as a substrate but perform the ketoreduction with a different stereoselectivity, thus yielding blennolides B and A, respectively. In the final step of the biosynthesis, the cytochrome P450 monooxygenase AacuE accepts blennolide B and/or blennolide A to conduct the dimerization reaction to furnish the tetrahydroxanthone dimers, secalonic acids D, B, and F. This chain is Monooxygenase AacuO, found in Aspergillus aculeatus (strain ATCC 16872 / CBS 172.66 / WB 5094).